Reading from the N-terminus, the 105-residue chain is UPF0145 protein lpl0253 (105 aa).

The protein belongs to the UPF0145 family.

This chain is UPF0145 protein lpl0253, found in Legionella pneumophila (strain Lens).